A 327-amino-acid polypeptide reads, in one-letter code: Olfactory receptor 51T1 (327 aa).

Topologically, residues 1–27 (MAIFNNTTSSSSNFLLTAFPGLECAHV) are extracellular. Residues asparagine 5 and asparagine 6 are each glycosylated (N-linked (GlcNAc...) asparagine). The chain crosses the membrane as a helical span at residues 28 to 48 (WISIPVCCLYTIALLGNSMIF). Residues 49 to 56 (LVIITKRR) lie on the Cytoplasmic side of the membrane. The chain crosses the membrane as a helical span at residues 57-77 (LHKPMYYFLSMLAAVDLCLTI). The Extracellular segment spans residues 78–101 (TTLPTVLGVLWFHAREISFKACFI). The chain crosses the membrane as a helical span at residues 102-122 (QMFFVHAFSLLESSVLVAMAF). Topologically, residues 123–141 (DRFVAICNPLNYATILTDR) are cytoplasmic. Residues 142-162 (MVLVIGLVICIRPAVFLLPLL) form a helical membrane-spanning segment. Residues 163–198 (VAINTVSFHGGHELSHPFCYHPEVIKYTYSKPWISS) lie on the Extracellular side of the membrane. Residues 199–219 (FWGLFLQLYLNGTDVLFILFS) form a helical membrane-spanning segment. The Cytoplasmic portion of the chain corresponds to 220-239 (YVLILRTVLGIVARKKQQKA). Residues 240-260 (LSTCVCHICAVTIFYVPLISL) form a helical membrane-spanning segment. Residues 261-275 (SLAHRLFHSTPRVLC) are Extracellular-facing. Residues 276-296 (STLANIYLLLPPVLNPIIYSL) form a helical membrane-spanning segment. The Cytoplasmic portion of the chain corresponds to 297-327 (KTKTIRQAMFQLLQSKGSWGFNVRGLRGRWD).

The protein belongs to the G-protein coupled receptor 1 family.

It localises to the cell membrane. Its function is as follows. Odorant receptor. This is Olfactory receptor 51T1 (OR51T1) from Homo sapiens (Human).